The sequence spans 758 residues: EMILIN-3 (758 aa).

A signal peptide spans 1–21; it reads MGRRLSVWLCTVAALLSGAQA. The region spanning 54 to 130 is the EMI domain; the sequence is HKSLCAYVVH…PGLTGESCPE (77 aa). Cystine bridges form between C58–C120, C85–C91, and C119–C128. The N-linked (GlcNAc...) asparagine glycan is linked to N65. A disordered region spans residues 131-178; that stretch reads HLTDHGATPPHQEPEPQIPLGQLGPGPRPSPYSREAPRPRGRKGQGPF. Residues 379–401 adopt a coiled-coil conformation; sequence SQLALISARVDSLERNLQAVTET. N-linked (GlcNAc...) asparagine glycosylation is present at N436. Coiled-coil stretches lie at residues 460 to 483 and 528 to 567; these read GSTL…ELSP and AEVK…QLAE. N-linked (GlcNAc...) asparagine glycosylation is found at N555 and N609. Coiled coils occupy residues 642–677 and 720–753; these read RQVL…ELQH and HIDK…AEVR. N-linked (GlcNAc...) asparagine glycosylation is present at N725.

The protein localises to the secreted. It localises to the extracellular space. It is found in the extracellular matrix. The protein resides in the cytoplasm. The polypeptide is EMILIN-3 (Emilin3) (Mus musculus (Mouse)).